We begin with the raw amino-acid sequence, 302 residues long: UDP-N-acetylenolpyruvoylglucosamine reductase (302 aa).

The region spanning 30–196 (IGGPADLFVE…IAATLEMKKG (167 aa)) is the FAD-binding PCMH-type domain. Arginine 174 is an active-site residue. Serine 225 (proton donor) is an active-site residue. Residue glutamate 295 is part of the active site.

Belongs to the MurB family. Requires FAD as cofactor.

Its subcellular location is the cytoplasm. The enzyme catalyses UDP-N-acetyl-alpha-D-muramate + NADP(+) = UDP-N-acetyl-3-O-(1-carboxyvinyl)-alpha-D-glucosamine + NADPH + H(+). Its pathway is cell wall biogenesis; peptidoglycan biosynthesis. Functionally, cell wall formation. This is UDP-N-acetylenolpyruvoylglucosamine reductase from Anoxybacillus flavithermus (strain DSM 21510 / WK1).